We begin with the raw amino-acid sequence, 279 residues long: Energy-coupling factor transporter ATP-binding protein EcfA2 (279 aa).

The region spanning 3-245 (IALENVNFIY…VVFMEEVQLG (243 aa)) is the ABC transporter domain. 40 to 47 (GHTGSGKS) provides a ligand contact to ATP.

It belongs to the ABC transporter superfamily. Energy-coupling factor EcfA family. As to quaternary structure, forms a stable energy-coupling factor (ECF) transporter complex composed of 2 membrane-embedded substrate-binding proteins (S component), 2 ATP-binding proteins (A component) and 2 transmembrane proteins (T component).

Its subcellular location is the cell membrane. Its function is as follows. ATP-binding (A) component of a common energy-coupling factor (ECF) ABC-transporter complex. Unlike classic ABC transporters this ECF transporter provides the energy necessary to transport a number of different substrates. This chain is Energy-coupling factor transporter ATP-binding protein EcfA2, found in Streptococcus pneumoniae serotype 2 (strain D39 / NCTC 7466).